A 324-amino-acid polypeptide reads, in one-letter code: Phospho-N-acetylmuramoyl-pentapeptide-transferase (324 aa).

A run of 10 helical transmembrane segments spans residues 5-25, 52-72, 76-96, 117-137, 147-167, 176-196, 203-223, 227-247, 250-270, and 302-322; these read IIVI…PLFI, PTMG…WVTA, VLSA…VLGF, FIGQ…SGFS, WSFD…VGGS, LDGL…VLAW, VAVF…FNAH, VFMG…VAVL, LELL…SVII, and IVVT…YIEV.

The protein belongs to the glycosyltransferase 4 family. MraY subfamily. Requires Mg(2+) as cofactor.

The protein localises to the cell membrane. It carries out the reaction UDP-N-acetyl-alpha-D-muramoyl-L-alanyl-gamma-D-glutamyl-meso-2,6-diaminopimeloyl-D-alanyl-D-alanine + di-trans,octa-cis-undecaprenyl phosphate = di-trans,octa-cis-undecaprenyl diphospho-N-acetyl-alpha-D-muramoyl-L-alanyl-D-glutamyl-meso-2,6-diaminopimeloyl-D-alanyl-D-alanine + UMP. It functions in the pathway cell wall biogenesis; peptidoglycan biosynthesis. Functionally, catalyzes the initial step of the lipid cycle reactions in the biosynthesis of the cell wall peptidoglycan: transfers peptidoglycan precursor phospho-MurNAc-pentapeptide from UDP-MurNAc-pentapeptide onto the lipid carrier undecaprenyl phosphate, yielding undecaprenyl-pyrophosphoryl-MurNAc-pentapeptide, known as lipid I. The chain is Phospho-N-acetylmuramoyl-pentapeptide-transferase from Geobacillus thermodenitrificans (strain NG80-2).